We begin with the raw amino-acid sequence, 148 residues long: FAD synthase (148 aa).

Residues threonine 5–phenylalanine 6, histidine 10–histidine 13, aspartate 92, and tyrosine 119 contribute to the ATP site.

The protein belongs to the archaeal FAD synthase family. Homodimer. It depends on a divalent metal cation as a cofactor.

It carries out the reaction FMN + ATP + H(+) = FAD + diphosphate. It functions in the pathway cofactor biosynthesis; FAD biosynthesis; FAD from FMN: step 1/1. In terms of biological role, catalyzes the transfer of the AMP portion of ATP to flavin mononucleotide (FMN) to produce flavin adenine dinucleotide (FAD) coenzyme. This is FAD synthase from Methanosphaera stadtmanae (strain ATCC 43021 / DSM 3091 / JCM 11832 / MCB-3).